A 304-amino-acid chain; its full sequence is Uricase (304 aa).

Alanine 2 carries the post-translational modification N-acetylalanine. Lysine 10 and lysine 23 each carry N6-acetyllysine; alternate. An N6-succinyllysine; alternate mark is found at lysine 10 and lysine 23. The active-site Charge relay system is the lysine 23. An N6-acetyllysine mark is found at lysine 27 and lysine 36. 2 positions are modified to phosphoserine: serine 39 and serine 63. The active-site Charge relay system is the threonine 68. Urate is bound by residues threonine 68 and aspartate 69. N6-acetyllysine is present on residues lysine 118, lysine 122, and lysine 164. Urate is bound at residue phenylalanine 170. An N6-acetyllysine mark is found at lysine 175 and lysine 185. Arginine 187 provides a ligand contact to urate. N6-acetyllysine; alternate is present on residues lysine 221 and lysine 228. N6-succinyllysine; alternate occurs at positions 221 and 228. Serine 232 is modified (phosphoserine). Urate contacts are provided by valine 235, glutamine 236, and asparagine 262. The active-site Charge relay system is the histidine 264. N6-acetyllysine is present on lysine 278. Tyrosine 289 is modified (phosphotyrosine). Residues 302–304 carry the Microbody targeting signal motif; it reads SRL.

This sequence belongs to the uricase family.

It is found in the peroxisome. The enzyme catalyses urate + O2 + H2O = 5-hydroxyisourate + H2O2. Its pathway is purine metabolism; urate degradation; (S)-allantoin from urate: step 1/3. Functionally, catalyzes the oxidation of uric acid to 5-hydroxyisourate, which is further processed to form (S)-allantoin. The protein is Uricase (UOX) of Macaca fascicularis (Crab-eating macaque).